We begin with the raw amino-acid sequence, 387 residues long: Probable 1-alkyl-2-acetylglycerophosphocholine esterase (387 aa).

The signal sequence occupies residues 1–17 (MLVQGTIICALVANAIA). N-linked (GlcNAc...) asparagine glycans are attached at residues N51 and N141. Catalysis depends on S227, which acts as the Nucleophile. The active-site Charge relay system is D250. The N-linked (GlcNAc...) asparagine glycan is linked to N283. H313 serves as the catalytic Charge relay system.

Belongs to the AB hydrolase superfamily. Lipase family.

It is found in the secreted. It catalyses the reaction a 1-O-alkyl-2-acetyl-sn-glycero-3-phosphocholine + H2O = a 1-O-alkyl-sn-glycero-3-phosphocholine + acetate + H(+). In Arthroderma benhamiae (strain ATCC MYA-4681 / CBS 112371) (Trichophyton mentagrophytes), this protein is Probable 1-alkyl-2-acetylglycerophosphocholine esterase.